Here is a 159-residue protein sequence, read N- to C-terminus: MQCPTCQNTDSRVLESRSADTGKSVRRRRECLNCSFRFTTYERVETMPISVIKKDGSRELFNKDKLVTGISRACEKTTFSRESIINFVDSIESQIVQDSNKDIKSSQIGELILKGLRKENEVAYIRYASVYRKFNGVKDFVSTLESLKGSSKNELASIL.

The segment at 3 to 34 (CPTCQNTDSRVLESRSADTGKSVRRRRECLNC) is a zinc-finger region. The ATP-cone domain maps to 49–139 (ISVIKKDGSR…VYRKFNGVKD (91 aa)).

Belongs to the NrdR family. The cofactor is Zn(2+).

Its function is as follows. Negatively regulates transcription of bacterial ribonucleotide reductase nrd genes and operons by binding to NrdR-boxes. In Prochlorococcus marinus subsp. pastoris (strain CCMP1986 / NIES-2087 / MED4), this protein is Transcriptional repressor NrdR.